The primary structure comprises 495 residues: Glucokinase (495 aa).

The Hexokinase domain occupies 3–483 (SALLDEAARI…SGVGAALIAL (481 aa)). The hexokinase small subdomain stretch occupies residues 57-206 (NGTEKGLYLA…GLPVRVAALV (150 aa)). Position 93 (Lys-93) interacts with ATP. Residues 149–175 (DLGFTFSFPVRQLGINKGTLIRWTKGF) form a glucose-binding region. The tract at residues 207–472 (NDTVGTLMAR…KKIRIGISKD (266 aa)) is hexokinase large subdomain. 472 to 477 (DGSGVG) is a binding site for ATP.

It belongs to the hexokinase family. As to quaternary structure, monomer.

It catalyses the reaction D-glucose + ATP = D-glucose 6-phosphate + ADP + H(+). The catalysed reaction is a D-hexose + ATP = a D-hexose 6-phosphate + ADP + H(+). The enzyme catalyses D-mannose + ATP = D-mannose 6-phosphate + ADP + H(+). It carries out the reaction D-glucosamine + ATP = D-glucosamine 6-phosphate + ADP + H(+). The protein operates within carbohydrate metabolism; hexose metabolism. Its pathway is carbohydrate degradation; glycolysis; D-glyceraldehyde 3-phosphate and glycerone phosphate from D-glucose: step 1/4. The enzyme has great affinity for glucose. Mannose, 2-deoxyglucose and glucosamine can serve as substrates. The protein is Glucokinase (glkA) of Aspergillus niger.